The chain runs to 92 residues: DNA-binding protein HU (92 aa).

The protein belongs to the bacterial histone-like protein family. Homodimer.

In terms of biological role, histone-like DNA-binding protein which is capable of wrapping DNA to stabilize it, and thus to prevent its denaturation under extreme environmental conditions. The sequence is that of DNA-binding protein HU (hup) from Buchnera aphidicola subsp. Acyrthosiphon pisum (strain APS) (Acyrthosiphon pisum symbiotic bacterium).